Here is a 288-residue protein sequence, read N- to C-terminus: Cell division protein ZipA (288 aa).

Position 1 (Met-1) is a topological domain, periplasmic. A helical membrane pass occupies residues 2–22 (EIGLREWLIVIGIIVIAGILF). Topologically, residues 23 to 288 (DGWRRMRGGK…FERRALTQKR (266 aa)) are cytoplasmic. Composition is skewed to basic and acidic residues over residues 66 to 75 (KEPQLDEHDL) and 83 to 93 (REAREPRESGS). The tract at residues 66 to 141 (KEPQLDEHDL…AKSSPAVADK (76 aa)) is disordered. The span at 106-117 (GDLNLDLDLDGG) shows a compositional bias: low complexity.

This sequence belongs to the ZipA family. Interacts with FtsZ via their C-terminal domains.

It localises to the cell inner membrane. Its function is as follows. Essential cell division protein that stabilizes the FtsZ protofilaments by cross-linking them and that serves as a cytoplasmic membrane anchor for the Z ring. Also required for the recruitment to the septal ring of downstream cell division proteins. This is Cell division protein ZipA from Pseudomonas fluorescens (strain Pf0-1).